The chain runs to 396 residues: Major outer membrane porin, serovar A (396 aa).

Residues 1-22 (MKKLLKSVLVFAALSSASSLQA) form the signal peptide.

It belongs to the chlamydial porin (CP) (TC 1.B.2) family. In terms of assembly, part of a disulfide cross-linked outer membrane complex (COMC) composed of the major outer membrane porin (MOMP), the small cysteine-rich protein (OmcA) and the large cysteine-rich periplasmic protein (OmcB).

The protein localises to the cell outer membrane. In terms of biological role, in elementary bodies (EBs, the infectious stage, which is able to survive outside the host cell) provides the structural integrity of the outer envelope through disulfide cross-links with the small cysteine-rich protein and the large cysteine-rich periplasmic protein. It has been described in publications as the Sarkosyl-insoluble COMC (Chlamydia outer membrane complex), and serves as the functional equivalent of peptidoglycan. Functionally, permits diffusion of specific solutes through the outer membrane. In Chlamydia trachomatis, this protein is Major outer membrane porin, serovar A (ompA).